Here is a 557-residue protein sequence, read N- to C-terminus: Probable asparagine synthetase [glutamine-hydrolyzing] (557 aa).

Cys-2 acts as the For GATase activity in catalysis. The Glutamine amidotransferase type-2 domain maps to 2–188 (CGILAVHHVA…PGHYYDSETK (187 aa)). Residues 50–54 (RLAIV), 75–77 (NGE), and Asp-99 contribute to the L-glutamine site. An Asparagine synthetase domain is found at 196 to 531 (PSWWDENKIP…PRQCADTVMR (336 aa)). Residues Leu-235, Ile-280, and 354 to 355 (SG) each bind ATP. Ser-391 and Ser-489 each carry phosphoserine.

The protein localises to the cytoplasm. Its subcellular location is the nucleus. It catalyses the reaction L-aspartate + L-glutamine + ATP + H2O = L-asparagine + L-glutamate + AMP + diphosphate + H(+). Its pathway is amino-acid biosynthesis; L-asparagine biosynthesis; L-asparagine from L-aspartate (L-Gln route): step 1/1. This is Probable asparagine synthetase [glutamine-hydrolyzing] (asn1) from Schizosaccharomyces pombe (strain 972 / ATCC 24843) (Fission yeast).